Consider the following 213-residue polypeptide: MOB kinase activator-like 1 homolog A (213 aa).

The Zn(2+) site is built by cysteine 77, cysteine 82, histidine 159, and histidine 164.

It belongs to the MOB1/phocein family.

The protein is MOB kinase activator-like 1 homolog A (mobA) of Dictyostelium discoideum (Social amoeba).